Here is a 329-residue protein sequence, read N- to C-terminus: Ribosomal protein L11 methyltransferase (329 aa).

Residues Thr177, Gly198, Asp220, and Asn264 each contribute to the S-adenosyl-L-methionine site.

It belongs to the methyltransferase superfamily. PrmA family.

It is found in the cytoplasm. It carries out the reaction L-lysyl-[protein] + 3 S-adenosyl-L-methionine = N(6),N(6),N(6)-trimethyl-L-lysyl-[protein] + 3 S-adenosyl-L-homocysteine + 3 H(+). In terms of biological role, methylates ribosomal protein L11. The sequence is that of Ribosomal protein L11 methyltransferase from Helicobacter acinonychis (strain Sheeba).